A 691-amino-acid chain; its full sequence is Probable serine/threonine-protein kinase pXi (691 aa).

The region spanning 18 to 263 (YEIGSQIGNG…IDQTLKHPWI (246 aa)) is the Protein kinase domain. ATP is bound by residues 24–32 (IGNGKFAQV) and K47. The active-site Proton acceptor is the D137. 4 disordered regions span residues 314–350 (TPIK…ENEN), 420–447 (ENDS…KFTS), 510–536 (QHNN…GNGT), and 600–620 (GGSG…KKDK). Residues 322–336 (NNNNNNNNNNNNNNN) are compositionally biased toward low complexity. A compositionally biased stretch (basic and acidic residues) spans 338–350 (ILDKKSNENENEN). 3 stretches are compositionally biased toward low complexity: residues 423–433 (SSSSETYSSSS), 512–536 (NNNI…GNGT), and 600–615 (GGSG…TGGS). A coiled-coil region spans residues 642–691 (PKETMDKLASVLSNYKQKNQEKSLKVKYEKQKDKYKKLKSQLKKDKSLLK).

It belongs to the protein kinase superfamily. CAMK Ser/Thr protein kinase family.

The catalysed reaction is L-seryl-[protein] + ATP = O-phospho-L-seryl-[protein] + ADP + H(+). It carries out the reaction L-threonyl-[protein] + ATP = O-phospho-L-threonyl-[protein] + ADP + H(+). The chain is Probable serine/threonine-protein kinase pXi (pXi) from Dictyostelium discoideum (Social amoeba).